Consider the following 719-residue polypeptide: DNA ligase (719 aa).

NAD(+) is bound by residues 42-46, 92-93, and glutamate 126; these read DAAYD and SL. Residue lysine 128 is the N6-AMP-lysine intermediate of the active site. NAD(+)-binding residues include arginine 149, glutamate 185, lysine 301, and lysine 325. Cysteine 430, cysteine 433, cysteine 448, and cysteine 454 together coordinate Zn(2+). In terms of domain architecture, BRCT spans 640-719; sequence ATGSPVEGKT…DDWFKLVGED (80 aa).

It belongs to the NAD-dependent DNA ligase family. LigA subfamily. Requires Mg(2+) as cofactor. The cofactor is Mn(2+).

It catalyses the reaction NAD(+) + (deoxyribonucleotide)n-3'-hydroxyl + 5'-phospho-(deoxyribonucleotide)m = (deoxyribonucleotide)n+m + AMP + beta-nicotinamide D-nucleotide.. Its function is as follows. DNA ligase that catalyzes the formation of phosphodiester linkages between 5'-phosphoryl and 3'-hydroxyl groups in double-stranded DNA using NAD as a coenzyme and as the energy source for the reaction. It is essential for DNA replication and repair of damaged DNA. The protein is DNA ligase of Brucella suis biovar 1 (strain 1330).